The following is a 112-amino-acid chain: MARIELGKEGEKLAIDYLLTKGYKILEKNFRTPFGEIDIIAKDGNFIVIIEVKRRLSDKFGKPELSVNYTKQQKLKKLALYYISMLKKEYPVRFDVIAINDKKIEHIENAFF.

The protein belongs to the UPF0102 family.

The protein is UPF0102 protein THEYE_A1950 of Thermodesulfovibrio yellowstonii (strain ATCC 51303 / DSM 11347 / YP87).